Reading from the N-terminus, the 72-residue chain is Translational regulator CsrA (72 aa).

Belongs to the CsrA/RsmA family. As to quaternary structure, homodimer; the beta-strands of each monomer intercalate to form a hydrophobic core, while the alpha-helices form wings that extend away from the core.

The protein localises to the cytoplasm. In terms of biological role, a translational regulator that binds mRNA to regulate translation initiation and/or mRNA stability. Usually binds in the 5'-UTR at or near the Shine-Dalgarno sequence preventing ribosome-binding, thus repressing translation. Its main target seems to be the major flagellin gene, while its function is anatagonized by FliW. This is Translational regulator CsrA from Ruminiclostridium cellulolyticum (strain ATCC 35319 / DSM 5812 / JCM 6584 / H10) (Clostridium cellulolyticum).